The primary structure comprises 883 residues: Phosphoenolpyruvate carboxylase (883 aa).

Catalysis depends on residues His138 and Lys546.

The protein belongs to the PEPCase type 1 family. Mg(2+) serves as cofactor.

It carries out the reaction oxaloacetate + phosphate = phosphoenolpyruvate + hydrogencarbonate. Forms oxaloacetate, a four-carbon dicarboxylic acid source for the tricarboxylic acid cycle. This Klebsiella pneumoniae (strain 342) protein is Phosphoenolpyruvate carboxylase.